Reading from the N-terminus, the 701-residue chain is Glycine--tRNA ligase beta subunit (701 aa).

The protein belongs to the class-II aminoacyl-tRNA synthetase family. In terms of assembly, tetramer of two alpha and two beta subunits.

It localises to the cytoplasm. The catalysed reaction is tRNA(Gly) + glycine + ATP = glycyl-tRNA(Gly) + AMP + diphosphate. This Helicobacter pylori (strain HPAG1) protein is Glycine--tRNA ligase beta subunit.